Consider the following 674-residue polypeptide: Xaa-Pro aminopeptidase 2 (674 aa).

The first 22 residues, 1 to 22 (MAQAYWQCYPWLVLLCACAWSY), serve as a signal peptide directing secretion. A glycan (N-linked (GlcNAc...) asparagine) is linked at Asn65. Substrate is bound at residue Arg116. Asn278 and Asn293 each carry an N-linked (GlcNAc...) asparagine glycan. Position 430 (His430) interacts with substrate. 3 residues coordinate Zn(2+): Asp450, Asp461, and His524. 3 residues coordinate substrate: His524, His533, and Glu555. Zn(2+)-binding residues include Glu555 and Glu569. A lipid anchor (GPI-anchor amidated alanine) is attached at Ala650. Positions 651 to 674 (SAPHTTSLASMWVASALAILSWSC) are cleaved as a propeptide — removed in mature form.

The protein belongs to the peptidase M24B family. As to quaternary structure, homotrimer. Requires Zn(2+) as cofactor. Post-translationally, N-glycosylated. In terms of tissue distribution, expressed strongly in lung, liver and heart, and at lower levels in kidney, testis, brain, spleen and skeletal muscle.

It localises to the cell membrane. It carries out the reaction Release of any N-terminal amino acid, including proline, that is linked to proline, even from a dipeptide or tripeptide.. Inhibited by the chelating agents 1,10-phenanthroline and EDTA. Inhibited by the thiol-containing compounds 2-mercaptoethanol and dithiothreitol. Also inhibited by apstatin, captopril and p-(ch1oromercuri)benzenesulfonic acid. Weakly inhibited by D,L-2-mercaptomethyl-3-guanidinoethylthiopropanoic acid and N-[l-(R,S)-carboxy-(2-phenylethyl)]-Ala-Ala-Phe-p-aminobenzoate. Inhibited by ramiprilat and enalaprilat, in a Mn(2+)-dependent manner. Metal ions have a complex substrate- and concentration-dependent effect on activity. Activity towards Arg-Pro-Pro and Gly-Pro-Hyp is stimulated by Mn(2+) ion concentrations of 10-100 uM and then inhibited at Mn(2+) concentrations of 1-2 mM. Mn(2+) concentrations in excess of 2 mM stimulate activity towards Gly-Pro-Hyp but inhibit activity towards Arg-Pro-Pro. Zn(2+) and Co(2+) ions also inhibit activity towards Arg-Pro-Pro at high concentrations. Activity towards bradykinin is inhibited by Mn(2+) concentrations in excess of 1 mM. In terms of biological role, membrane-bound metalloprotease which catalyzes the removal of a penultimate prolyl residue from the N-termini of peptides, such as Arg-Pro-Pro. May play a role in the metabolism of the vasodilator bradykinin. The sequence is that of Xaa-Pro aminopeptidase 2 from Rattus norvegicus (Rat).